Reading from the N-terminus, the 305-residue chain is Tyrosine recombinase XerD (305 aa).

Residues 9 to 94 (MQDFGYVEQF…AIRRLFQYLH (86 aa)) form the Core-binding (CB) domain. Residues 115-299 (RLPKDISEEQ…ATERLKQIHS (185 aa)) enclose the Tyr recombinase domain. Residues R155, K179, H251, R254, and H277 contribute to the active site. Catalysis depends on Y286, which acts as the O-(3'-phospho-DNA)-tyrosine intermediate.

The protein belongs to the 'phage' integrase family. XerD subfamily. As to quaternary structure, forms a cyclic heterotetrameric complex composed of two molecules of XerC and two molecules of XerD.

It is found in the cytoplasm. In terms of biological role, site-specific tyrosine recombinase, which acts by catalyzing the cutting and rejoining of the recombining DNA molecules. The XerC-XerD complex is essential to convert dimers of the bacterial chromosome into monomers to permit their segregation at cell division. It also contributes to the segregational stability of plasmids. The polypeptide is Tyrosine recombinase XerD (Vibrio vulnificus (strain CMCP6)).